Reading from the N-terminus, the 283-residue chain is Pantothenate synthetase (283 aa).

30–37 is an ATP binding site; the sequence is MGNLHAGH. His37 acts as the Proton donor in catalysis. Gln61 lines the (R)-pantoate pocket. Gln61 is a beta-alanine binding site. 149–152 contributes to the ATP binding site; it reads GEKD. A (R)-pantoate-binding site is contributed by Gln155. Residues Val178 and 186–189 each bind ATP; that span reads LSSR.

It belongs to the pantothenate synthetase family. Homodimer.

The protein resides in the cytoplasm. The catalysed reaction is (R)-pantoate + beta-alanine + ATP = (R)-pantothenate + AMP + diphosphate + H(+). The protein operates within cofactor biosynthesis; (R)-pantothenate biosynthesis; (R)-pantothenate from (R)-pantoate and beta-alanine: step 1/1. Its function is as follows. Catalyzes the condensation of pantoate with beta-alanine in an ATP-dependent reaction via a pantoyl-adenylate intermediate. The polypeptide is Pantothenate synthetase (Azotobacter vinelandii (strain DJ / ATCC BAA-1303)).